We begin with the raw amino-acid sequence, 377 residues long: Methionine import ATP-binding protein MetN 2 (377 aa).

Residues 25 to 262 (IRIEHLSKTF…PKSAVARSFL (238 aa)) enclose the ABC transporter domain. 59–66 (GRSGAGKS) is a binding site for ATP.

It belongs to the ABC transporter superfamily. Methionine importer (TC 3.A.1.24) family. In terms of assembly, the complex is composed of two ATP-binding proteins (MetN), two transmembrane proteins (MetI) and a solute-binding protein (MetQ).

The protein resides in the cell inner membrane. The catalysed reaction is L-methionine(out) + ATP + H2O = L-methionine(in) + ADP + phosphate + H(+). It carries out the reaction D-methionine(out) + ATP + H2O = D-methionine(in) + ADP + phosphate + H(+). Functionally, part of the ABC transporter complex MetNIQ involved in methionine import. Responsible for energy coupling to the transport system. The polypeptide is Methionine import ATP-binding protein MetN 2 (Rhodopseudomonas palustris (strain ATCC BAA-98 / CGA009)).